We begin with the raw amino-acid sequence, 86 residues long: MEFKIMSTTDKIEQKVIEMVAEKLNKDKSIITTDSRFIEDLKADSLDTVELMMAIEVEYGIDIPDDEATKIKTVSDVIQYIKERQS.

The 76-residue stretch at 10-85 (DKIEQKVIEM…DVIQYIKERQ (76 aa)) folds into the Carrier domain. Position 45 is an O-(pantetheine 4'-phosphoryl)serine (Ser45).

The protein belongs to the acyl carrier protein (ACP) family. 4'-phosphopantetheine is transferred from CoA to a specific serine of apo-ACP by AcpS. This modification is essential for activity because fatty acids are bound in thioester linkage to the sulfhydryl of the prosthetic group.

It localises to the cytoplasm. Its pathway is lipid metabolism; fatty acid biosynthesis. Carrier of the growing fatty acid chain in fatty acid biosynthesis. In Rickettsia canadensis (strain McKiel), this protein is Acyl carrier protein.